Consider the following 140-residue polypeptide: Small ribosomal subunit protein uS12 (140 aa).

Residues 33-55 are disordered; that stretch reads KEQTNVSSPQKRGVCTRVGTMTP. Position 102 is a 3-methylthioaspartic acid (Asp-102).

It belongs to the universal ribosomal protein uS12 family. Part of the 30S ribosomal subunit. Contacts proteins S8 and S17. May interact with IF1 in the 30S initiation complex.

Its function is as follows. With S4 and S5 plays an important role in translational accuracy. In terms of biological role, interacts with and stabilizes bases of the 16S rRNA that are involved in tRNA selection in the A site and with the mRNA backbone. Located at the interface of the 30S and 50S subunits, it traverses the body of the 30S subunit contacting proteins on the other side and probably holding the rRNA structure together. The combined cluster of proteins S8, S12 and S17 appears to hold together the shoulder and platform of the 30S subunit. This chain is Small ribosomal subunit protein uS12, found in Geobacillus thermodenitrificans (strain NG80-2).